The following is a 228-amino-acid chain: Urease accessory protein UreF (228 aa).

It belongs to the UreF family. As to quaternary structure, ureD, UreF and UreG form a complex that acts as a GTP-hydrolysis-dependent molecular chaperone, activating the urease apoprotein by helping to assemble the nickel containing metallocenter of UreC. The UreE protein probably delivers the nickel.

The protein resides in the cytoplasm. Required for maturation of urease via the functional incorporation of the urease nickel metallocenter. The polypeptide is Urease accessory protein UreF (Prochlorococcus marinus (strain MIT 9215)).